We begin with the raw amino-acid sequence, 181 residues long: ATP synthase subunit delta (181 aa).

The protein belongs to the ATPase delta chain family. As to quaternary structure, F-type ATPases have 2 components, F(1) - the catalytic core - and F(0) - the membrane proton channel. F(1) has five subunits: alpha(3), beta(3), gamma(1), delta(1), epsilon(1). F(0) has three main subunits: a(1), b(2) and c(10-14). The alpha and beta chains form an alternating ring which encloses part of the gamma chain. F(1) is attached to F(0) by a central stalk formed by the gamma and epsilon chains, while a peripheral stalk is formed by the delta and b chains.

The protein resides in the cell membrane. F(1)F(0) ATP synthase produces ATP from ADP in the presence of a proton or sodium gradient. F-type ATPases consist of two structural domains, F(1) containing the extramembraneous catalytic core and F(0) containing the membrane proton channel, linked together by a central stalk and a peripheral stalk. During catalysis, ATP synthesis in the catalytic domain of F(1) is coupled via a rotary mechanism of the central stalk subunits to proton translocation. Functionally, this protein is part of the stalk that links CF(0) to CF(1). It either transmits conformational changes from CF(0) to CF(1) or is implicated in proton conduction. The polypeptide is ATP synthase subunit delta (Lacticaseibacillus paracasei (strain ATCC 334 / BCRC 17002 / CCUG 31169 / CIP 107868 / KCTC 3260 / NRRL B-441) (Lactobacillus paracasei)).